The chain runs to 548 residues: Mannosyltransferase APTG1 (548 aa).

Positions M1 to N23 are disordered. The next 3 membrane-spanning stretches (helical) occupy residues I41 to N61, L98 to I118, and G146 to L166. N-linked (GlcNAc...) asparagine glycosylation is present at N167. 7 helical membrane-spanning segments follow: residues T169–I189, L204–V224, F238–D258, L260–S280, F294–I314, K320–F340, and F342–E362. N-linked (GlcNAc...) asparagine glycosylation is present at N382. The helical transmembrane segment at L392 to H412 threads the bilayer. An N-linked (GlcNAc...) asparagine glycan is attached at N490.

The protein belongs to the glycosyltransferase 22 family. As to expression, mostly expressed, mainly in vascular tissues, in leaves, roots, stems, flowers, siliques and pollen, and, to a lower extent, in seedlings.

It is found in the endoplasmic reticulum membrane. Its function is as follows. Mannosyltransferase involved in glycosylphosphatidylinositol-anchor biosynthesis. Required for the pollen tube micropylar guidance and embryo development by regulating GPI-anchor mediated protein localization (e.g. COBL10 and A36). In Arabidopsis thaliana (Mouse-ear cress), this protein is Mannosyltransferase APTG1.